We begin with the raw amino-acid sequence, 132 residues long: Small ribosomal subunit protein uS8 (132 aa).

Belongs to the universal ribosomal protein uS8 family. As to quaternary structure, part of the 30S ribosomal subunit. Contacts proteins S5 and S12.

Its function is as follows. One of the primary rRNA binding proteins, it binds directly to 16S rRNA central domain where it helps coordinate assembly of the platform of the 30S subunit. The chain is Small ribosomal subunit protein uS8 from Bradyrhizobium sp. (strain ORS 278).